Consider the following 197-residue polypeptide: Endo-1,4-beta-xylanase A (197 aa).

Residues 1–197 (SGTPSSTGTD…SSGTATITVT (197 aa)) enclose the GH11 domain. Glu87 functions as the Nucleophile in the catalytic mechanism. Cys111 and Cys160 are disulfide-bonded. Glu184 serves as the catalytic Proton donor.

Belongs to the glycosyl hydrolase 11 (cellulase G) family.

It localises to the secreted. It catalyses the reaction Endohydrolysis of (1-&gt;4)-beta-D-xylosidic linkages in xylans.. It participates in glycan degradation; xylan degradation. Hydrolyzes xylans into xylobiose and xylose. The polypeptide is Endo-1,4-beta-xylanase A (XYNA) (Schizophyllum commune (Split gill fungus)).